The following is a 254-amino-acid chain: Imidazole glycerol phosphate synthase subunit HisF (254 aa).

Residues Asp14 and Asp133 contribute to the active site.

The protein belongs to the HisA/HisF family. Heterodimer of HisH and HisF.

Its subcellular location is the cytoplasm. It carries out the reaction 5-[(5-phospho-1-deoxy-D-ribulos-1-ylimino)methylamino]-1-(5-phospho-beta-D-ribosyl)imidazole-4-carboxamide + L-glutamine = D-erythro-1-(imidazol-4-yl)glycerol 3-phosphate + 5-amino-1-(5-phospho-beta-D-ribosyl)imidazole-4-carboxamide + L-glutamate + H(+). It functions in the pathway amino-acid biosynthesis; L-histidine biosynthesis; L-histidine from 5-phospho-alpha-D-ribose 1-diphosphate: step 5/9. In terms of biological role, IGPS catalyzes the conversion of PRFAR and glutamine to IGP, AICAR and glutamate. The HisF subunit catalyzes the cyclization activity that produces IGP and AICAR from PRFAR using the ammonia provided by the HisH subunit. This is Imidazole glycerol phosphate synthase subunit HisF from Nitratiruptor sp. (strain SB155-2).